The chain runs to 652 residues: Fimbrin-4 (652 aa).

Calponin-homology (CH) domains lie at 116–233 (ESEK…KIQL), 261–364 (LAPE…HHRN), 388–494 (SREE…RYTM), and 509–617 (DITE…NWSL). Actin-binding stretches follow at residues 116 to 364 (ESEK…HHRN) and 388 to 617 (SREE…NWSL). The segment at 623-652 (TESTVSDDTDVSSVTEEISNLSTDDGSSDV) is disordered. The span at 640–652 (ISNLSTDDGSSDV) shows a compositional bias: polar residues.

As to quaternary structure, interacts with F-actin.

The protein localises to the cytoplasm. Its subcellular location is the cytoskeleton. Its function is as follows. Cross-links actin filaments (F-actin). Stabilizes and prevents F-actin depolymerization mediated by profilin. May regulate actin cytoarchitecture, cell cycle, cell division, cell elongation and cytoplasmic tractus. The protein is Fimbrin-4 of Arabidopsis thaliana (Mouse-ear cress).